Here is a 400-residue protein sequence, read N- to C-terminus: Diphosphomevalonate decarboxylase (400 aa).

At A2 the chain carries N-acetylalanine. Residues 23–26, R78, 156–161, and T212 contribute to the (R)-5-diphosphomevalonate site; these read YWGK and SGSACR.

It belongs to the diphosphomevalonate decarboxylase family. As to quaternary structure, homodimer.

Its subcellular location is the cytoplasm. It catalyses the reaction (R)-5-diphosphomevalonate + ATP = isopentenyl diphosphate + ADP + phosphate + CO2. The protein operates within steroid biosynthesis; cholesterol biosynthesis. Catalyzes the ATP dependent decarboxylation of (R)-5-diphosphomevalonate to form isopentenyl diphosphate (IPP). Functions in the mevalonate (MVA) pathway leading to isopentenyl diphosphate (IPP), a key precursor for the biosynthesis of isoprenoids and sterol synthesis. In Bos taurus (Bovine), this protein is Diphosphomevalonate decarboxylase (MVD).